The chain runs to 570 residues: Dihydroxy-acid dehydratase (570 aa).

Residues 1 to 25 (MSQQDSPANADHRRRHSSIVVDGPG) form a disordered region. C60 contacts [2Fe-2S] cluster. Position 92 (D92) interacts with Mg(2+). [2Fe-2S] cluster is bound at residue C133. Residues D134 and K135 each contribute to the Mg(2+) site. K135 is subject to N6-carboxylysine. [2Fe-2S] cluster is bound at residue C202. E453 contacts Mg(2+). S479 acts as the Proton acceptor in catalysis.

Belongs to the IlvD/Edd family. In terms of assembly, homodimer. [2Fe-2S] cluster is required as a cofactor. The cofactor is Mg(2+).

It catalyses the reaction (2R)-2,3-dihydroxy-3-methylbutanoate = 3-methyl-2-oxobutanoate + H2O. It carries out the reaction (2R,3R)-2,3-dihydroxy-3-methylpentanoate = (S)-3-methyl-2-oxopentanoate + H2O. Its pathway is amino-acid biosynthesis; L-isoleucine biosynthesis; L-isoleucine from 2-oxobutanoate: step 3/4. It participates in amino-acid biosynthesis; L-valine biosynthesis; L-valine from pyruvate: step 3/4. In terms of biological role, functions in the biosynthesis of branched-chain amino acids. Catalyzes the dehydration of (2R,3R)-2,3-dihydroxy-3-methylpentanoate (2,3-dihydroxy-3-methylvalerate) into 2-oxo-3-methylpentanoate (2-oxo-3-methylvalerate) and of (2R)-2,3-dihydroxy-3-methylbutanoate (2,3-dihydroxyisovalerate) into 2-oxo-3-methylbutanoate (2-oxoisovalerate), the penultimate precursor to L-isoleucine and L-valine, respectively. The sequence is that of Dihydroxy-acid dehydratase from Chromohalobacter salexigens (strain ATCC BAA-138 / DSM 3043 / CIP 106854 / NCIMB 13768 / 1H11).